We begin with the raw amino-acid sequence, 271 residues long: Energy-coupling factor transporter ATP-binding protein EcfA (271 aa).

The 230-residue stretch at 2-231 (ISIQNLTFYY…PLFLQQYKLN (230 aa)) folds into the ABC transporter domain. 34-41 (GHNGSGKS) serves as a coordination point for ATP.

This sequence belongs to the ABC transporter superfamily. Energy-coupling factor EcfA family. As to quaternary structure, forms a stable energy-coupling factor (ECF) transporter complex composed of 2 membrane-embedded substrate-binding proteins (S component), 2 ATP-binding proteins (A component) and 2 transmembrane proteins (T component).

It is found in the cell membrane. ATP-binding (A) component of a common energy-coupling factor (ECF) ABC-transporter complex. Unlike classic ABC transporters this ECF transporter provides the energy necessary to transport a number of different substrates. In Onion yellows phytoplasma (strain OY-M), this protein is Energy-coupling factor transporter ATP-binding protein EcfA.